We begin with the raw amino-acid sequence, 341 residues long: UDP-3-O-acylglucosamine N-acyltransferase (341 aa).

His-239 (proton acceptor) is an active-site residue.

The protein belongs to the transferase hexapeptide repeat family. LpxD subfamily. As to quaternary structure, homotrimer.

It carries out the reaction a UDP-3-O-[(3R)-3-hydroxyacyl]-alpha-D-glucosamine + a (3R)-hydroxyacyl-[ACP] = a UDP-2-N,3-O-bis[(3R)-3-hydroxyacyl]-alpha-D-glucosamine + holo-[ACP] + H(+). It functions in the pathway bacterial outer membrane biogenesis; LPS lipid A biosynthesis. In terms of biological role, catalyzes the N-acylation of UDP-3-O-acylglucosamine using 3-hydroxyacyl-ACP as the acyl donor. Is involved in the biosynthesis of lipid A, a phosphorylated glycolipid that anchors the lipopolysaccharide to the outer membrane of the cell. This is UDP-3-O-acylglucosamine N-acyltransferase from Shewanella oneidensis (strain ATCC 700550 / JCM 31522 / CIP 106686 / LMG 19005 / NCIMB 14063 / MR-1).